Here is a 341-residue protein sequence, read N- to C-terminus: MTIAITGGGTGGHLTIAKILAYELKKRGLKTIFIGSTNGQDMLWFENSVLFDEKYFLKSSGVVNKKGISRILSLFKILALSFGCRKIFAKHDVKAVISVGGYSSAPAAFWAVANKIPLFIHEQNAEIGKINALLKRFAKRFYSSYFEPKFDYPIDEIFLKTARIRREVKTVMFLGGSQGANFINELAVKLAPHLAEFGYKIIHQCGEANEAKMREIYKKESINVELIGFSKMLHKFVESADLCISRSGASTLWELAANAVPAVFIPFPYAAGDHQYYNAKFLEQFCKIVRQSDADEERIFSIIQNFDVKAASIGLKKLIKPDGAKKIVDDIIENLKNEDKK.

UDP-N-acetyl-alpha-D-glucosamine contacts are provided by residues 10–12, Asn-124, Ser-177, and Gln-275; that span reads TGG.

Belongs to the glycosyltransferase 28 family. MurG subfamily.

The protein resides in the cell inner membrane. The catalysed reaction is di-trans,octa-cis-undecaprenyl diphospho-N-acetyl-alpha-D-muramoyl-L-alanyl-D-glutamyl-meso-2,6-diaminopimeloyl-D-alanyl-D-alanine + UDP-N-acetyl-alpha-D-glucosamine = di-trans,octa-cis-undecaprenyl diphospho-[N-acetyl-alpha-D-glucosaminyl-(1-&gt;4)]-N-acetyl-alpha-D-muramoyl-L-alanyl-D-glutamyl-meso-2,6-diaminopimeloyl-D-alanyl-D-alanine + UDP + H(+). Its pathway is cell wall biogenesis; peptidoglycan biosynthesis. Its function is as follows. Cell wall formation. Catalyzes the transfer of a GlcNAc subunit on undecaprenyl-pyrophosphoryl-MurNAc-pentapeptide (lipid intermediate I) to form undecaprenyl-pyrophosphoryl-MurNAc-(pentapeptide)GlcNAc (lipid intermediate II). The sequence is that of UDP-N-acetylglucosamine--N-acetylmuramyl-(pentapeptide) pyrophosphoryl-undecaprenol N-acetylglucosamine transferase from Campylobacter hominis (strain ATCC BAA-381 / DSM 21671 / CCUG 45161 / LMG 19568 / NCTC 13146 / CH001A).